A 264-amino-acid polypeptide reads, in one-letter code: tRNA pseudouridine synthase A (264 aa).

Asp51 functions as the Nucleophile in the catalytic mechanism. Position 109 (Tyr109) interacts with substrate.

It belongs to the tRNA pseudouridine synthase TruA family. In terms of assembly, homodimer.

It carries out the reaction uridine(38/39/40) in tRNA = pseudouridine(38/39/40) in tRNA. Its function is as follows. Formation of pseudouridine at positions 38, 39 and 40 in the anticodon stem and loop of transfer RNAs. This chain is tRNA pseudouridine synthase A, found in Vibrio parahaemolyticus serotype O3:K6 (strain RIMD 2210633).